The following is a 90-amino-acid chain: MNADGPVVNVHVLFFAKSRELANTPRSKVDVPTKITASDLLDLLVSRFGLISIRDNLILAHNESYIDNLSDTVLFKEGDELAIIPPLSGG.

At glycine 90 the chain carries 1-thioglycine; alternate. Glycine 90 carries the glycyl adenylate; alternate modification.

This sequence belongs to the MoaD family. MOCS2A subfamily. In terms of assembly, heterotetramer; composed of 2 small (Mocs2A) and 2 large (Mocs2B) subunits. C-terminal thiocarboxylation occurs in 2 steps, it is first acyl-adenylated (-COAMP) via the hesA/moeB/thiF part of MOCS3, then thiocarboxylated (-COSH) via the rhodanese domain of MOCS3.

Its subcellular location is the cytoplasm. Its pathway is cofactor biosynthesis; molybdopterin biosynthesis. Functionally, acts as a sulfur carrier required for molybdopterin biosynthesis. Component of the molybdopterin synthase complex that catalyzes the conversion of precursor Z into molybdopterin by mediating the incorporation of 2 sulfur atoms into precursor Z to generate a dithiolene group. In the complex, serves as sulfur donor by being thiocarboxylated (-COSH) at its C-terminus by MOCS3. After interaction with Mocs2B, the sulfur is then transferred to precursor Z to form molybdopterin. The chain is Molybdopterin synthase sulfur carrier subunit from Drosophila erecta (Fruit fly).